A 117-amino-acid polypeptide reads, in one-letter code: Large ribosomal subunit protein uL18 (117 aa).

The protein belongs to the universal ribosomal protein uL18 family. In terms of assembly, part of the 50S ribosomal subunit; part of the 5S rRNA/L5/L18/L25 subcomplex. Contacts the 5S and 23S rRNAs.

This is one of the proteins that bind and probably mediate the attachment of the 5S RNA into the large ribosomal subunit, where it forms part of the central protuberance. The sequence is that of Large ribosomal subunit protein uL18 from Vibrio vulnificus (strain CMCP6).